The following is a 218-amino-acid chain: Small ribosomal subunit protein uS3c (218 aa).

The KH type-2 domain maps to 47–118; the sequence is VQNNIRISSG…KLNIAITRIS (72 aa).

It belongs to the universal ribosomal protein uS3 family. In terms of assembly, part of the 30S ribosomal subunit.

It localises to the plastid. The protein localises to the chloroplast. This is Small ribosomal subunit protein uS3c (rps3) from Draba nemorosa (Woodland whitlowgrass).